Here is a 251-residue protein sequence, read N- to C-terminus: Flap endonuclease Xni (251 aa).

Asp-104 contacts Mg(2+). A 5'-3' exonuclease domain is found at 160–249; it reads VLPRQLPDYW…IDGNLQQLRL (90 aa). K(+) is bound by residues Leu-171, Ala-172, Pro-180, Val-182, and Ile-185. The interval 184–189 is interaction with DNA; that stretch reads GIGPKS.

It belongs to the Xni family. The cofactor is Mg(2+). It depends on K(+) as a cofactor.

Has flap endonuclease activity. During DNA replication, flap endonucleases cleave the 5'-overhanging flap structure that is generated by displacement synthesis when DNA polymerase encounters the 5'-end of a downstream Okazaki fragment. The sequence is that of Flap endonuclease Xni from Salmonella dublin (strain CT_02021853).